Here is a 284-residue protein sequence, read N- to C-terminus: Bifunctional protein FolD 1 (284 aa).

Residues 164 to 166, serine 189, and isoleucine 230 contribute to the NADP(+) site; that span reads GRS.

This sequence belongs to the tetrahydrofolate dehydrogenase/cyclohydrolase family. In terms of assembly, homodimer.

It catalyses the reaction (6R)-5,10-methylene-5,6,7,8-tetrahydrofolate + NADP(+) = (6R)-5,10-methenyltetrahydrofolate + NADPH. It carries out the reaction (6R)-5,10-methenyltetrahydrofolate + H2O = (6R)-10-formyltetrahydrofolate + H(+). It participates in one-carbon metabolism; tetrahydrofolate interconversion. Catalyzes the oxidation of 5,10-methylenetetrahydrofolate to 5,10-methenyltetrahydrofolate and then the hydrolysis of 5,10-methenyltetrahydrofolate to 10-formyltetrahydrofolate. This chain is Bifunctional protein FolD 1, found in Rubrobacter xylanophilus (strain DSM 9941 / JCM 11954 / NBRC 16129 / PRD-1).